Consider the following 419-residue polypeptide: Gamma-glutamyl phosphate reductase (419 aa).

It belongs to the gamma-glutamyl phosphate reductase family.

The protein resides in the cytoplasm. The enzyme catalyses L-glutamate 5-semialdehyde + phosphate + NADP(+) = L-glutamyl 5-phosphate + NADPH + H(+). It participates in amino-acid biosynthesis; L-proline biosynthesis; L-glutamate 5-semialdehyde from L-glutamate: step 2/2. In terms of biological role, catalyzes the NADPH-dependent reduction of L-glutamate 5-phosphate into L-glutamate 5-semialdehyde and phosphate. The product spontaneously undergoes cyclization to form 1-pyrroline-5-carboxylate. The protein is Gamma-glutamyl phosphate reductase of Solidesulfovibrio magneticus (strain ATCC 700980 / DSM 13731 / RS-1) (Desulfovibrio magneticus).